A 302-amino-acid chain; its full sequence is Protoheme IX farnesyltransferase (302 aa).

Helical transmembrane passes span 27–47 (VVALILFTALVGMLLSVPGMV), 53–73 (LFGLLGIGLAAASGAALNHVI), 100–120 (LVFAIAMGVVAMGILVLAVNV), 121–141 (LTAVLTFFALIGYAVIYTVFL), 149–169 (IVWGGLAGALPPLLGWVAVTG), 175–195 (PLLLVLLIFVWTPPHFWALAI), 215–235 (VAFTKLQVLLYTLMLLTVSLV), 237–257 (FIIHMTGLIYLVGALALGIGF), and 273–293 (AMPTFGYSIFYLTAMFALLLV).

Belongs to the UbiA prenyltransferase family. Protoheme IX farnesyltransferase subfamily.

It localises to the cell inner membrane. The enzyme catalyses heme b + (2E,6E)-farnesyl diphosphate + H2O = Fe(II)-heme o + diphosphate. It functions in the pathway porphyrin-containing compound metabolism; heme O biosynthesis; heme O from protoheme: step 1/1. Its function is as follows. Converts heme B (protoheme IX) to heme O by substitution of the vinyl group on carbon 2 of heme B porphyrin ring with a hydroxyethyl farnesyl side group. This Thioalkalivibrio sulfidiphilus (strain HL-EbGR7) protein is Protoheme IX farnesyltransferase.